Here is a 4486-residue protein sequence, read N- to C-terminus: MRLAEERAALAAENADGEPGADRRLRLLGTYVAMSLRPAAGAWERCAGSAEAEQLLQAFLGRDAAEGPRPLLVVRPGPRGLAIRPGLEVGPESGLAGAKALFFLRTGPEPPGPDSFRGAVVCGDLPAAPLEHLAALFSEVVLPVLANEKNRLNWPHMICEDVRRHAHSLQCDLSVILEQVKGKTLLPLPAGSEKMEFADSKSETVLDSIDKSVIYAIESAVIKWSYQVQVVLKRESSQPLLQGENPTPKVELEFWKSRYEDLKYIYNQLRTITVRGMAKLLDKLQSSYFPAFKAMYRDVVAALAEAQDIHVHLIPLQRHLEALENAEFPEVKPQLRPLLHVVCLIWATCKSYRSPGRLTVLLQEICNLLIQQASNYLSPEDLLRSEVEESQRKLQVVSDTLSFFKQEFQDRRENLHTYFKENQEVKEWDFQSSLVFVRLDGFLGQLHVVEGLLKTALDFHKLGKVEFSGVRGNALSQQVQQMHEEFQEMYRLLSGSSSDCLYLQSTDFENDVSEFNQKVEDLDRRLGTIFIQAFDDAPGLEHAFKLLDIAGNLLERPLVARDTSDKYLVLIQMFNKDLDAVRMIYSQHVQEEAELGFSPVHKNMPTVAGGLRWAQELRQRIQGPFSNFGRITHPCMESAEGKRMQQKYEDMLSLLEKYETRLYEDWCRTVSEKSQYNLSQPLLKRDPETKEITINFNPQLISVLKEMSYLEPREMKHMPETAAAMFSSRDFYRQLVANLELMANWYNKVMKTLLEVEFPLVEEELQNIDLRLRAAEETLNWKTEGICDYVTEITSSIHDLEQRIQKTKDNVEEIQNIMKTWVTPIFKTKDGKRESLLSLDDRHDRMEKYYNLIKESGLKIHALVQENLGLFSADPTSNIWKTYVNSIDNLLLNGFFLAIECSLKYLLENTECKAGLTPIFEAQLSLAIPELVFYPSLESGVKGGFCDIVEGLITSIFRIPSLVPRLSPQNGSPHYQVDLDGIPDLANMRRTLMERVQRMMGLCCGYQSTFSQYSYLYVEDRKEVLGQFLLYGHILTPEEIEDHVEDGIPENPPLLSQFKVQIDSYETLYEEVCRLEPIKVFDGWMKIDIRPFKASLLNIIKRWSLLFKQHLVDHVTHSLANLDAFIKKSESGLLKKVEKGDFQGLVEIMGHLMAVKERQSNTDEMFEPLKQTIELLKTYEQELPETVFKQLEELPEKWNNIKKVAITVKQQVAPLQANEVTLLRQRCTAFDAEQQQFWEQFHKEAPFRFDSIHPHQMLDARHIEIQQMESTMASISESASLFEVNVPDYKQLRQCRKEVCQLKELWDTIGMVTSSIHAWETTPWRNINVEAMELECKQFARHIRNLDKEVRAWDAFTGLESTVWNTLSSLRAVAELQNPAIRERHWRQLMQATGVSFTMDQDTTLAHLLQLQLHHYEDEVRGIVDKAAKEMGMEKTLKELQTTWAGMEFQYEPHPRTNVPLLCSDEDLIEVLEDNQVQLQNLVMSKYVAFFLEEVSGWQKKLSTVDAVISIWFEVQRTWTHLESIFTGSEDIRAQLPQDSKRFEGIDIDFKELAYDAQKIPNVVQTTNKPGLYEKLEDIQGRLCLCEKALAEYLDTKRLAFPRFYFLSSSDLLDILSNGTAPQQVQRHLSKLFDNMAKMRFQLDASGEPTKTSLGMYSKEEEYVAFSEPCDCSGQVEIWLNHVLGHMKATVRHEMTEGVTAYEEKPREQWLFDHPAQVALTCTQIWWTTEVGMAFARLEEGYESAMKDYYKKQVAQLKTLITMLIGQLSKGDRQKIMTICTIDVHARDVVAKMIAQKVDNAQAFLWLSQLRHRWDDEVKHCFANICDAQFLYSYEYLGNTPRLVITPLTDRCYITLTQSLHLTMSGAPAGPAGTGKTETTKDLGRALGILVYVFNCSEQMDYKSCGNIYKGLAQTGAWGCFDEFNRISVEVLSVVAVQVKSIQDAIRDKKQWFSFLGEEISLNPSVGIFITMNPGYAGRTELPENLKSLFRPCAMVVPDFELICEIMLVAEGFIEAQSLARKFITLYQLCKELLSKQDHYDWGLRAIKSVLVVAGSLKRGDPDRPEDQVLMRSLRDFNIPKIVTDDMPIFMGLIGDLFPALDVPRRRDPNFEALVRKAIVDLKLQAEDNFVLKVVQLEELLAVRHSVFVVGGAGTGKSQVLRSLHKTYQIMKRRPVWTDLNPKAVTNDELFGIINPATGEWKDGLFSSIMRELANITHDGPKWILLDGDIDPMWIESLNTVMDDNKVLTLASNERIPLNPTMKLLFEISHLRTATPATVSRAGILYINPADLGWNPPVSSWIEKREIQTERANLTILFDKYLPTCLDTLRTRFKKIIPIPEQSMVQMVCHLLECLLTTEDIPADCPKEIYEHYFVFAAIWAFGGAMVQDQLVDYRAEFSKWWLTEFKTVKFPSQGTIFDYYIDPETKKFEPWSKLVPQFEFDPEMPLQACLVHTSETIRVCYFMERLMARQRPVMLVGTAGTGKSVLVGAKLASLDPEAYLVKNVPFNYYTTSAMLQAVLEKPLEKKAGRNYGPPGNKKLIYFIDDMNMPEVDAYGTVQPHTIIRQHLDYGHWYDRSKLSLKEITNVQYVSCMNPTAGSFTINPRLQRHFSVFVLSFPGADALSSIYSIILTQHLKLGNFPASLQKSIPPLIDLALAFHQKIATTFLPTGIKFHYIFNLRDFANIFQGILFSSVECVKSTWDLIRLYLHESNRVYRDKMVEEKDFDLFDKIQTEVLKKTFDDIEDPVEQTQSPNLYCHFANGIGEPKYMPVQSWELLTQTLVEALENHNEVNTVMDLVLFEDAMRHVCHINRILESPRGNALLVGVGGSGKQSLTRLAAFISSMDVFQITLRKGYQIQDFKMDLASLCLKAGVKNLNTVFLMTDAQVADERFLVLINDLLASGEIPDLYSDDEVENIISNVRNEVKSQGLVDNRENCWKFFIDRIRRQLKVTLCFSPVGNKLRVRSRKFPAIVNCTAIHWFHEWPQQALESVSLRFLQNTEGIEPTVKQSISKFMAFVHTSVNQTSQSYLSNEQRYNYTTPKSFLEFIRLYQSLLHRHRKELKCKTERLENGLLKLHSTSAQVDDLKAKLAAQEVELKQKNEDADKLIQVVGVETDKVSREKAMADEEEQKVAVIMLEVKQKQKDCEEDLAKAEPALTAAQAALNTLNKTNLTELKSFGSPPLAVSNVSAAVMVLMAPRGRVPKDRSWKAAKVTMAKVDGFLDSLINFNKENIHENCLKAIRPYLQDPEFNPEFVATKSYAAAGLCSWVINIVRFYEVFCDVEPKRQALNKATADLTAAQEKLAAIKAKIAHLNENLAKLTARFEKATADKLKCQQEAEVTAVTISLANRLVGGLASENVRWADAVQNFKQQERTLCGDILLITAFISYLGFFTKKYRQSLLDRTWRPYLSQLKTPIPVTPALDPLRMLMDDADVAAWQNEGLPADRMSVENATILINCERWPLMVDPQLQGIKWIKNKYGEDLRVTQIGQKGYLQIIEQALEAGAVVLIENLEESIDPVLGPLLGREVIKKGRFIKIGDKECEYNPKFRLILHTKLANPHYQPELQAQATLINFTVTRDGLEDQLLAAVVSMERPDLEQLKSDLTKQQNGFKITLKTLEDSLLSRLSSASGNFLGETVLVENLEITKQTAAEVEKKVQEAKVTEVKINEAREHYRPAAARASLLYFIMNDLSKIHPMYQFSLKAFSIVFQKAVERAAPDESLRERVANLIDSITFSVYQYTIRGLFECDKLTYLAQLTFQILLMNREVNAVELDFLLRSPVQTGTASPVEFLSHQAWGAVKVLSSMEEFSNLDRDIEGSAKSWKKFVESECPEKEKLPQEWKNKTALQRLCMLRAMRPDRMTYALRDFVEEKLGSKYVVGRALDFATSFEESGPATPMFFILSPGVDPLKDVESQGRKLGYTFNNQNFHNVSLGQGQEVVAEAALDLAAKKGHWVILQNIHLVAKWLSTLEKKLEEHSENSHPEFRVFMSAEPAPSPEGHIIPQGILENSIKITNEPPTGMHANLHKALDNFTQDTLEMCSRETEFKSILFALCYFHAVVAERRKFGPQGWNRSYPFNTGDLTISVNVLYNFLEANAKVPYDDLRYLFGEIMYGGHITDDWDRRLCRTYLGEFIRPEMLEGELSLAPGFPLPGNMDYNGYHQYIDAELPPESPYLYGLHPNAEIGFLTQTSEKLFRTVLELQPRDSQARDGAGATREEKVKALLEEILERVTDEFNIPELMAKVEERTPYIVVAFQECGRMNILTREIQRSLRELELGLKGELTMTSHMENLQNALYFDMVPESWARRAYPSTAGLAAWFPDLLNRIKELEAWTGDFTMPSTVWLTGFFNPQSFLTAIMQSTARKNEWPLDQMALQCDMTKKNREEFRSPPREGAYIHGLFMEGACWDTQAGIITEAKLKDLTPPMPVMFIKAIPADKQDCRSVYSCPVYKTSQRGPTYVWTFNLKTKENPSKWVLAGVALLLQI.

The interval 1–1831 (MRLAEERAAL…FANICDAQFL (1831 aa)) is stem. 5 coiled-coil regions span residues 381 to 410 (DLLR…EFQD), 504 to 529 (QSTD…LGTI), 639 to 662 (AEGK…ETRL), 752 to 823 (TLLE…TWVT), and 1326 to 1355 (NINV…AWDA). 4 AAA regions span residues 1832-2053 (YSYE…VLVV), 2113-2334 (ALVR…TRFK), 2440-2688 (EFDP…IFQG), and 2787-3036 (NHNE…EQRY). Residues 1870 to 1877 (GPAGTGKT), 2151 to 2158 (GGAGTGKS), 2478 to 2485 (GTAGTGKS), and 2825 to 2832 (GVGGSGKQ) each bind ATP. 3 coiled-coil regions span residues 3051-3154 (YQSL…AKAE), 3285-3341 (KRQA…AEVT), and 3640-3675 (LVEN…REHY). The interval 3051-3341 (YQSLLHRHRK…LKCQQEAEVT (291 aa)) is stalk. 2 AAA regions span residues 3429 to 3656 (LMDD…EVEK) and 3866 to 4092 (LRDF…VLYN).

Belongs to the dynein heavy chain family. Consists of at least two heavy chains and a number of intermediate and light chains. Interacts with ODAD1. As to expression, expressed in upper and lower respiratory airway epithelia (at protein level). Not detected in spermatozoa (at protein level).

The protein resides in the cytoplasm. The protein localises to the cytoskeleton. It is found in the cilium axoneme. In terms of biological role, force generating protein required for cilia beating in respiratory epithelia. Produces force towards the minus ends of microtubules. Dynein has ATPase activity; the force-producing power stroke is thought to occur on release of ADP. The polypeptide is Dynein axonemal heavy chain 9 (Homo sapiens (Human)).